A 406-amino-acid chain; its full sequence is Phosphatidylinositol 5-phosphate 4-kinase type-2 alpha (406 aa).

A2 bears the N-acetylalanine mark. The residue at position 3 (T3) is a Phosphothreonine. Phosphoserine is present on S14. Residues 33–405 (ASDPLLSVLM…RFLDFIGHIL (373 aa)) form the PIPK domain. Residues 59–65 (VMLMPDD) form a required for interaction with PIP5K1A region. An N6-acetyllysine mark is found at K89 and K145. The tract at residues 288–329 (QEEVECEENDGEEEGESDGTHPVGTPPDSPGNTLNSSPPLAP) is disordered. The segment covering 289-304 (EEVECEENDGEEEGES) has biased composition (acidic residues).

Homodimer. Interacts with PIP4K2B; the interaction may regulate localization to the nucleus. Probably interacts with PIP5K1A; the interaction inhibits PIP5K1A kinase activity. Phosphorylated in tyrosines. Phosphorylation is induced by light and increases kinase activity.

Its subcellular location is the cell membrane. The protein resides in the nucleus. It localises to the lysosome. It is found in the cytoplasm. The protein localises to the photoreceptor inner segment. Its subcellular location is the cell projection. The protein resides in the cilium. It localises to the photoreceptor outer segment. The catalysed reaction is a 1,2-diacyl-sn-glycero-3-phospho-(1D-myo-inositol-5-phosphate) + ATP = a 1,2-diacyl-sn-glycero-3-phospho-(1D-myo-inositol-4,5-bisphosphate) + ADP + H(+). It carries out the reaction 1,2-dihexadecanoyl-sn-glycero-3-phospho-(1D-myo-inositol-5-phosphate) + ATP = 1,2-dihexadecanoyl-sn-glycero-3-phospho-(1D-myo-inositol-4,5-bisphosphate) + ADP + H(+). It catalyses the reaction 1,2-dihexadecanoyl-sn-glycero-3-phospho-(1D-myo-inositol-5-phosphate) + GTP = 1,2-dihexadecanoyl-sn-glycero-3-phospho-(1D-myo-inositol-4,5-bisphosphate) + GDP + H(+). Its activity is regulated as follows. In rod outer segments, activated by light. Its function is as follows. Catalyzes the phosphorylation of phosphatidylinositol 5-phosphate (PtdIns5P) on the fourth hydroxyl of the myo-inositol ring, to form phosphatidylinositol 4,5-bisphosphate (PtdIns(4,5)P2). Has both ATP- and GTP-dependent kinase activities. May exert its function by regulating the levels of PtdIns5P, which functions in the cytosol by increasing AKT activity and in the nucleus signals through ING2. May regulate the pool of cytosolic PtdIns5P in response to the activation of tyrosine phosphorylation. May be involved in thrombopoiesis, and the terminal maturation of megakaryocytes and regulation of their size. May negatively regulate insulin-stimulated glucose uptake by lowering the levels of PtdIns5P. The polypeptide is Phosphatidylinositol 5-phosphate 4-kinase type-2 alpha (PIP4K2A) (Sus scrofa (Pig)).